Here is a 154-residue protein sequence, read N- to C-terminus: Telokin (154 aa).

The interval 1–24 is disordered; the sequence is ISGMSGRKASGSSPTSPINANKVE. Over residues 10 to 19 the composition is skewed to polar residues; sequence SGSSPTSPIN. One can recognise an Ig-like C2-type domain in the interval 42–133; sequence PYFTKTILDM…ATCTAELLVE (92 aa). The tract at residues 134 to 154 is disordered; sequence TMGKEGEGEGEGEEDEEEEEE. Residues 141-154 show a composition bias toward acidic residues; the sequence is GEGEGEEDEEEEEE.

The protein belongs to the protein kinase superfamily. CAMK Ser/Thr protein kinase family. Binds calmodulin.

Corresponds to the C-terminus of smooth muscle myosin light chain kinase. The protein is Telokin of Meleagris gallopavo (Wild turkey).